Consider the following 269-residue polypeptide: Bis(5'-nucleosyl)-tetraphosphatase, symmetrical (269 aa).

This sequence belongs to the Ap4A hydrolase family.

The enzyme catalyses P(1),P(4)-bis(5'-adenosyl) tetraphosphate + H2O = 2 ADP + 2 H(+). In terms of biological role, hydrolyzes diadenosine 5',5'''-P1,P4-tetraphosphate to yield ADP. In Vibrio vulnificus (strain CMCP6), this protein is Bis(5'-nucleosyl)-tetraphosphatase, symmetrical.